We begin with the raw amino-acid sequence, 467 residues long: Uronate isomerase (467 aa).

This sequence belongs to the metallo-dependent hydrolases superfamily. Uronate isomerase family.

It catalyses the reaction D-glucuronate = D-fructuronate. The catalysed reaction is aldehydo-D-galacturonate = keto-D-tagaturonate. It participates in carbohydrate metabolism; pentose and glucuronate interconversion. This chain is Uronate isomerase, found in Streptococcus uberis (strain ATCC BAA-854 / 0140J).